The sequence spans 431 residues: UDP-N-acetylglucosamine 1-carboxyvinyltransferase (431 aa).

A phosphoenolpyruvate-binding site is contributed by 22-23 (KN). Arg102 lines the UDP-N-acetyl-alpha-D-glucosamine pocket. Cys126 (proton donor) is an active-site residue. Cys126 is subject to 2-(S-cysteinyl)pyruvic acid O-phosphothioketal. UDP-N-acetyl-alpha-D-glucosamine contacts are provided by Asp318 and Ile340.

Belongs to the EPSP synthase family. MurA subfamily.

The protein localises to the cytoplasm. The enzyme catalyses phosphoenolpyruvate + UDP-N-acetyl-alpha-D-glucosamine = UDP-N-acetyl-3-O-(1-carboxyvinyl)-alpha-D-glucosamine + phosphate. It participates in cell wall biogenesis; peptidoglycan biosynthesis. In terms of biological role, cell wall formation. Adds enolpyruvyl to UDP-N-acetylglucosamine. In Bartonella tribocorum (strain CIP 105476 / IBS 506), this protein is UDP-N-acetylglucosamine 1-carboxyvinyltransferase.